Here is a 181-residue protein sequence, read N- to C-terminus: Large ribosomal subunit protein uL5c (181 aa).

Belongs to the universal ribosomal protein uL5 family. Part of the 50S ribosomal subunit; contacts the 5S rRNA.

The protein resides in the plastid. Its subcellular location is the chloroplast. Its function is as follows. Binds 5S rRNA, forms part of the central protuberance of the 50S subunit. The protein is Large ribosomal subunit protein uL5c (rpl5) of Pyropia yezoensis (Susabi-nori).